We begin with the raw amino-acid sequence, 510 residues long: Ent-sandaracopimaradiene 3-hydroxylase (510 aa).

The chain crosses the membrane as a helical span at residues 4-24 (MLVAGAGAAAVAAVGGLVAAA). Position 454 (cysteine 454) interacts with heme.

The protein belongs to the cytochrome P450 family. As to quaternary structure, interacts with the rice dwarf virus (RDV) P2 protein. Heme serves as cofactor. In terms of tissue distribution, expressed in leaf blades and sheaths, stems and panicles.

The protein resides in the membrane. The catalysed reaction is ent-sandaracopimara-8(14),15-diene + reduced [NADPH--hemoprotein reductase] + O2 = ent-sandaracopimaradien-3beta-ol + oxidized [NADPH--hemoprotein reductase] + H2O + H(+). It carries out the reaction 9beta-pimara-7,15-diene + reduced [NADPH--hemoprotein reductase] + O2 = 9beta-pimara-7,15-diene-3beta-ol + oxidized [NADPH--hemoprotein reductase] + H2O + H(+). Functionally, catalyzes the hydroxylation of ent-sandaracopimaradiene at the C3alpha position to produce ent-3beta-hydroxy-sandaracopimaradiene, an intermediates for the biosynthesis of oryzalexin D and oryzalexin E phytoalexins. Catalyzes the hydroxylation of ent-cassadiene at the C3alpha position to produce 3alpha-hydroxy-ent-cassadiene, which may be an intermediate for the biosynthesis of phytocassane phytoalexins. Catalyzes the hydroxylation of syn-pimaradiene (9-beta-pimara-7,15-diene) at the C3beta position to produce 3-beta-syn-pimaradiene. Can hydroxylate ent-kaurene in vitro, but the product is not ent-kauren-19-ol as expected for ent-kaurene oxidase activity. This chain is Ent-sandaracopimaradiene 3-hydroxylase, found in Oryza sativa subsp. japonica (Rice).